A 154-amino-acid chain; its full sequence is NADPH-dependent 7-cyano-7-deazaguanine reductase (154 aa).

Residues 1–24 (MPKTDVSGLSQLGTKVDLPQSPEE) are disordered. The active-site Thioimide intermediate is Cys52. Asp59 functions as the Proton donor in the catalytic mechanism. Residues 74 to 76 (VES) and 93 to 94 (HE) each bind substrate.

It belongs to the GTP cyclohydrolase I family. QueF type 1 subfamily.

The protein localises to the cytoplasm. The catalysed reaction is 7-aminomethyl-7-carbaguanine + 2 NADP(+) = 7-cyano-7-deazaguanine + 2 NADPH + 3 H(+). Its pathway is tRNA modification; tRNA-queuosine biosynthesis. Functionally, catalyzes the NADPH-dependent reduction of 7-cyano-7-deazaguanine (preQ0) to 7-aminomethyl-7-deazaguanine (preQ1). The polypeptide is NADPH-dependent 7-cyano-7-deazaguanine reductase (Sinorhizobium fredii (strain NBRC 101917 / NGR234)).